Consider the following 760-residue polypeptide: Elongation factor G, mitochondrial (760 aa).

The transit peptide at 1–37 directs the protein to the mitochondrion; sequence MIRGMLPRGLRALRPSVSPTVVSSSLHRNFHSSIRRF. In terms of domain architecture, tr-type G spans 68–349; the sequence is SRLRNIGVSA…AVVDYLPQPN (282 aa). Residues 77-84, 148-152, and 202-205 contribute to the GTP site; these read AHIDSGKT, DTPGH, and NKMD.

Belongs to the TRAFAC class translation factor GTPase superfamily. Classic translation factor GTPase family. EF-G/EF-2 subfamily.

The protein resides in the mitochondrion. Its pathway is protein biosynthesis; polypeptide chain elongation. In terms of biological role, mitochondrial GTPase that catalyzes the GTP-dependent ribosomal translocation step during translation elongation. During this step, the ribosome changes from the pre-translocational (PRE) to the post-translocational (POST) state as the newly formed A-site-bound peptidyl-tRNA and P-site-bound deacylated tRNA move to the P and E sites, respectively. Catalyzes the coordinated movement of the two tRNA molecules, the mRNA and conformational changes in the ribosome. The chain is Elongation factor G, mitochondrial from Meyerozyma guilliermondii (strain ATCC 6260 / CBS 566 / DSM 6381 / JCM 1539 / NBRC 10279 / NRRL Y-324) (Yeast).